The chain runs to 94 residues: Co-chaperonin GroES (94 aa).

The protein belongs to the GroES chaperonin family. In terms of assembly, heptamer of 7 subunits arranged in a ring. Interacts with the chaperonin GroEL.

It is found in the cytoplasm. In terms of biological role, together with the chaperonin GroEL, plays an essential role in assisting protein folding. The GroEL-GroES system forms a nano-cage that allows encapsulation of the non-native substrate proteins and provides a physical environment optimized to promote and accelerate protein folding. GroES binds to the apical surface of the GroEL ring, thereby capping the opening of the GroEL channel. The chain is Co-chaperonin GroES from Anoxybacillus flavithermus (strain DSM 21510 / WK1).